A 426-amino-acid polypeptide reads, in one-letter code: Oligouridylate-binding protein 1A (426 aa).

Residues 1–26 (MQNQRLIKQQQQQQQQQHQQAMIQQA) are disordered. Low complexity predominate over residues 9 to 26 (QQQQQQQQQHQQAMIQQA). RRM domains are found at residues 63 to 137 (RSVY…WAYA) and 148 to 226 (FNIF…WATK). The tract at residues 230–268 (FGEDKHSSDGKSVVELTNGSSEDGRELSNEDAPENNPQF) is disordered. Ser250 bears the Phosphoserine mark. In terms of domain architecture, RRM 3 spans 269–344 (TTVYVGNLSP…RQIRCSWGNK (76 aa)).

In terms of assembly, interacts with UBA1A and UBA2A.

It localises to the nucleus. Heterogeneous nuclear ribonucleoprotein (hnRNP)-like protein that acts as a component of the pre-mRNA processing machinery. Functions to facilitate the nuclear maturation of plant pre-mRNAs. The sequence is that of Oligouridylate-binding protein 1A (UBP1A) from Arabidopsis thaliana (Mouse-ear cress).